Consider the following 89-residue polypeptide: uncharacterized protein (89 aa).

An N-terminal signal peptide occupies residues 1-19 (MIVRTLLIAAALLGGTAQA).

It localises to the secreted. This is an uncharacterized protein from Pseudomonas aeruginosa (strain UCBPP-PA14).